The following is a 524-amino-acid chain: Peptide chain release factor 3 (524 aa).

Residues 8 to 276 (NKRRTFAIIS…GFAKYAPAPE (269 aa)) form the tr-type G domain. GTP is bound by residues 17–24 (SHPDAGKT), 85–89 (DTPGH), and 139–142 (NKLD).

Belongs to the TRAFAC class translation factor GTPase superfamily. Classic translation factor GTPase family. PrfC subfamily.

Its subcellular location is the cytoplasm. In terms of biological role, increases the formation of ribosomal termination complexes and stimulates activities of RF-1 and RF-2. It binds guanine nucleotides and has strong preference for UGA stop codons. It may interact directly with the ribosome. The stimulation of RF-1 and RF-2 is significantly reduced by GTP and GDP, but not by GMP. The protein is Peptide chain release factor 3 of Hydrogenovibrio crunogenus (strain DSM 25203 / XCL-2) (Thiomicrospira crunogena).